Here is a 160-residue protein sequence, read N- to C-terminus: MITLYEAAIKTLITHRKQILKHPDSREILLALGLYWDKTHILLKCHECGKMSLTGKHSTKCININCLLILAIKKKNKRMVDTLIRMGADVTYIHLLKNKIKLSYNQLSMLKSNSQIALKELHAICYLLYGRLPKKIKQGMQLCKTMAGLCGELLCAFLAP.

This sequence belongs to the asfivirus MGF 300 family.

Its function is as follows. Plays a role in virus cell tropism, and may be required for efficient virus replication in macrophages. This chain is Protein MGF 300-2R, found in Ornithodoros (relapsing fever ticks).